We begin with the raw amino-acid sequence, 146 residues long: Core protein OPG114 (146 aa).

This sequence belongs to the orthopoxvirus OPG114 family. As to quaternary structure, part of a complex composed of the kinase OPG054, OPG092, OPG100, OPG114, OPG115, OPG142 and OPG157.

It localises to the virion. In terms of biological role, late protein which is part of a large complex required for early virion morphogenesis. This complex participates in the formation of virosomes and the incorporation of virosomal contents into nascent immature virions. The protein is Core protein OPG114 (OPG114) of Monkeypox virus.